We begin with the raw amino-acid sequence, 952 residues long: Isoleucine--tRNA ligase (952 aa).

Positions 58–68 match the 'HIGH' region motif; the sequence is PYANGDIHIGH. Glu-576 is an L-isoleucyl-5'-AMP binding site. The 'KMSKS' region motif lies at 617 to 621; sequence KMSKS. ATP is bound at residue Lys-620. Zn(2+)-binding residues include Cys-915, Cys-918, Cys-935, and Cys-938.

It belongs to the class-I aminoacyl-tRNA synthetase family. IleS type 1 subfamily. Monomer. The cofactor is Zn(2+).

It is found in the cytoplasm. It catalyses the reaction tRNA(Ile) + L-isoleucine + ATP = L-isoleucyl-tRNA(Ile) + AMP + diphosphate. Its function is as follows. Catalyzes the attachment of isoleucine to tRNA(Ile). As IleRS can inadvertently accommodate and process structurally similar amino acids such as valine, to avoid such errors it has two additional distinct tRNA(Ile)-dependent editing activities. One activity is designated as 'pretransfer' editing and involves the hydrolysis of activated Val-AMP. The other activity is designated 'posttransfer' editing and involves deacylation of mischarged Val-tRNA(Ile). The sequence is that of Isoleucine--tRNA ligase from Vibrio atlanticus (strain LGP32) (Vibrio splendidus (strain Mel32)).